Reading from the N-terminus, the 110-residue chain is Small nuclear ribonucleoprotein Sm D2 (110 aa).

One can recognise a Sm domain in the interval 31 to 110 (MSLINDAMVT…VIVVLKTPVE (80 aa)).

Belongs to the snRNP core protein family. Component of the Sm core complex, present in spliceosomal snRNP U1, U2, U4/U6 and U5. The core complex contains SMB1, SMD1, SMD2, SMD3, SME1, SMX3 and SMX2 (Sm proteins B, D1, D2, D3, E, F and G, respectively), and is probably a heptameric ring structure. Belongs to the CWC complex (or CEF1-associated complex), a spliceosome sub-complex reminiscent of a late-stage spliceosome composed of the U2, U5 and U6 snRNAs and at least BUD13, BUD31, BRR2, CDC40, CEF1, CLF1, CUS1, CWC2, CWC15, CWC21, CWC22, CWC23, CWC24, CWC25, CWC27, ECM2, HSH155, IST3, ISY1, LEA1, MSL1, NTC20, PRP8, PRP9, PRP11, PRP19, PRP21, PRP22, PRP45, PRP46, SLU7, SMB1, SMD1, SMD2, SMD3, SMX2, SMX3, SNT309, SNU114, SPP2, SYF1, SYF2, RSE1 and YJU2. Component of the U4/U6-U5 tri-snRNP complex composed of the U4, U6 and U5 snRNAs and at least PRP3, PRP4, PRP6, PRP8, PRP18, PRP31, PRP38, SNU13, SNU23, SNU66, SNU114, SPP381, SMB1, SMD1, SMD2, SMD3, SMX2, SMX3, LSM2, LSM3, LSM4, LSM5, LSM6, LSM7, LSM8, BRR2 and DIB1.

The protein resides in the nucleus. The protein localises to the cytoplasm. Its subcellular location is the cytosol. Plays a role in pre-mRNA splicing as a core component of the spliceosomal U1, U2, U4 and U5 small nuclear ribonucleoproteins (snRNPs), the building blocks of the spliceosome. The polypeptide is Small nuclear ribonucleoprotein Sm D2 (SMD2) (Saccharomyces cerevisiae (strain ATCC 204508 / S288c) (Baker's yeast)).